A 565-amino-acid polypeptide reads, in one-letter code: Ubiquitin carboxyl-terminal hydrolase 39 (565 aa).

Composition is skewed to basic and acidic residues over residues 1 to 21 (MSGR…ESES) and 28 to 39 (VKRERDREREPE). Disordered regions lie at residues 1 to 61 (MSGR…SARE) and 75 to 95 (EREV…NGRV). Ser-46 carries the phosphoserine modification. Lys-51 participates in a covalent cross-link: Glycyl lysine isopeptide (Lys-Gly) (interchain with G-Cter in SUMO2). A Phosphoserine modification is found at Ser-82. The segment covering 85 to 95 (EREVRAKNGRV) has biased composition (basic and acidic residues). The UBP-type; degenerate zinc-finger motif lies at 103 to 200 (RHCPYLDTIN…YVLKPTFTKQ (98 aa)). Cys-136, Cys-139, His-155, and His-161 together coordinate Zn(2+). Residues 225 to 555 (VGLNNIKAND…EAYIQIWKRR (331 aa)) enclose the USP domain.

It belongs to the peptidase C19 family. The U4/U6-U5 tri-snRNP complex is a building block of the precatalytic spliceosome (spliceosome B complex). Component of the U4/U6-U5 tri-snRNP complex composed of the U4, U6 and U5 snRNAs and at least PRPF3, PRPF4, PRPF6, PRPF8, PRPF31, SNRNP200, TXNL4A, SNRNP40, SNRPB, SNRPD1, SNRPD2, SNRPD3, SNRPE, SNRPF, SNRPG, DDX23, CD2BP2, PPIH, SNU13, EFTUD2, SART1 and USP39, plus LSM2, LSM3, LSM4, LSM5, LSM6, LSM7 and LSM8.

Its subcellular location is the nucleus. It carries out the reaction Thiol-dependent hydrolysis of ester, thioester, amide, peptide and isopeptide bonds formed by the C-terminal Gly of ubiquitin (a 76-residue protein attached to proteins as an intracellular targeting signal).. Functionally, deubiquitinating enzyme that plays a role in many cellular processes including cellular antiviral response, epithelial morphogenesis, DNA repair or B-cell development. Plays a role in pre-mRNA splicing as a component of the U4/U6-U5 tri-snRNP, one of the building blocks of the precatalytic spliceosome. Specifically regulates immunoglobulin gene rearrangement in a spliceosome-dependent manner, which involves modulating chromatin interactions at the Igh locus and therefore plays an essential role in B-cell development. Regulates AURKB mRNA levels, and thereby plays a role in cytokinesis and in the spindle checkpoint. Regulates apoptosis and G2/M cell cycle checkpoint in response to DNA damage by deubiquitinating and stabilizing CHK2. Also plays an important role in DNA repair by controlling the recruitment of XRCC4/LIG4 to DNA double-strand breaks for non-homologous end-joining repair. Participates in antiviral activity by affecting the type I IFN signaling by stabilizing STAT1 and decreasing its 'Lys-6'-linked ubiquitination. Contributes to non-canonical Wnt signaling during epidermal differentiation. Acts as a negative regulator NF-kappa-B activation through deubiquitination of 'Lys-48'-linked ubiquitination of NFKBIA. This is Ubiquitin carboxyl-terminal hydrolase 39 from Homo sapiens (Human).